A 1481-amino-acid polypeptide reads, in one-letter code: Cystic fibrosis transmembrane conductance regulator (1481 aa).

Residues M1–F77 are Cytoplasmic-facing. A helical transmembrane segment spans residues F78–Q98. Residues F81 to L365 form the ABC transmembrane type-1 1 domain. Residues P99 to Y122 are Extracellular-facing. The helical transmembrane segment at L123 to H146 threads the bilayer. The Cytoplasmic segment spans residues H147 to L195. Residues A196–W216 form a helical membrane-spanning segment. The Extracellular portion of the chain corresponds to E217 to S222. Residues A223–M243 form a helical membrane-spanning segment. The Cytoplasmic portion of the chain corresponds to M244–K298. The helical transmembrane segment at A299–F319 threads the bilayer. Residues L320–T339 lie on the Extracellular side of the membrane. The chain crosses the membrane as a helical span at residues I340 to V358. Topologically, residues Q359–S858 are cytoplasmic. Residues W401, S434, G458–T465, and Q493 contribute to the ATP site. The 224-residue stretch at N423–G646 folds into the ABC transporter 1 domain. The S-palmitoyl cysteine moiety is linked to residue C524. Phosphoserine occurs at positions 549 and 660. Residues S654–E831 form a disordered R region region. S670 is modified (phosphoserine; by PKA). S686 carries the post-translational modification Phosphoserine. A Glycyl lysine isopeptide (Lys-Gly) (interchain with G-Cter in ubiquitin) cross-link involves residue K688. S700 and S712 each carry phosphoserine. A Phosphothreonine modification is found at T717. Phosphoserine is present on residues S737, S753, S768, S790, S795, and S813. A helical transmembrane segment spans residues L859–V879. The ABC transmembrane type-1 2 domain occupies L859 to S1155. The Extracellular portion of the chain corresponds to V880–I918. Residues N894 and N900 are each glycosylated (N-linked (GlcNAc...) asparagine). A discontinuously helical transmembrane segment spans residues Y919–H939. The Cytoplasmic segment spans residues T940 to T990. The helical transmembrane segment at I991 to L1011 threads the bilayer. The Extracellular segment spans residues Q1012–P1013. The helical transmembrane segment at Y1014–L1034 threads the bilayer. The Cytoplasmic portion of the chain corresponds to Q1035–T1095. A helical membrane pass occupies residues L1096–F1116. The Extracellular segment spans residues I1117–G1130. Residues I1131–I1151 form a helical membrane-spanning segment. Residues D1152–L1481 lie on the Cytoplasmic side of the membrane. An ABC transporter 2 domain is found at M1211–P1444. Residues Y1220 and G1245–S1252 each bind ATP. The tract at residues R1387 to L1481 is interaction with GORASP2. The S-palmitoyl cysteine moiety is linked to residue C1396. S1445 and S1457 each carry phosphoserine. The interval Q1462 to L1481 is disordered. Residues E1471–L1481 are compositionally biased toward acidic residues. A PDZ-binding motif is present at residues T1479–L1481.

The protein belongs to the ABC transporter superfamily. ABCC family. CFTR transporter (TC 3.A.1.202) subfamily. Monomer; does not require oligomerization for channel activity. May form oligomers in the membrane. Interacts with SLC26A3, SLC26A6 and NHERF1. Interacts with SHANK2. Interacts with MYO6. Interacts (via C-terminus) with GOPC (via PDZ domain); this promotes CFTR internalization and thereby decreases channel activity. Interacts with SLC4A7 through NHERF1. Found in a complex with MYO5B and RAB11A. Interacts with ANO1. Interacts with SLC26A8. Interacts with AHCYL1; the interaction increases CFTR activity. Interacts with CSE1L. The core-glycosylated form interacts with GORASP2 (via PDZ GRASP-type 1 domain) in respone to ER stress. Interacts with MARCHF2; the interaction leads to CFTR ubiqtuitination and degradation. Interacts with ADGRG2. In terms of processing, N-glycosylated. Post-translationally, phosphorylated; cAMP treatment promotes phosphorylation and activates the channel. Dephosphorylation decreases the ATPase activity (in vitro). Phosphorylation at PKA sites activates the channel. Phosphorylation at PKC sites enhances the response to phosphorylation by PKA. Phosphorylated by AMPK; this inhibits channel activity. Ubiquitinated, leading to its degradation in the lysosome. Deubiquitination by USP10 in early endosomes enhances its endocytic recycling to the cell membrane. Ubiquitinated by RNF185 during ER stress. Ubiquitinated by MARCHF2.

Its subcellular location is the apical cell membrane. The protein resides in the early endosome membrane. It is found in the cell membrane. The protein localises to the recycling endosome membrane. It localises to the endoplasmic reticulum membrane. Its subcellular location is the nucleus. It catalyses the reaction ATP + H2O + closed Cl(-) channel = ADP + phosphate + open Cl(-) channel.. The catalysed reaction is chloride(in) = chloride(out). The enzyme catalyses hydrogencarbonate(in) = hydrogencarbonate(out). It carries out the reaction ATP + H2O = ADP + phosphate + H(+). Functionally, epithelial ion channel that plays an important role in the regulation of epithelial ion and water transport and fluid homeostasis. Mediates the transport of chloride ions across the cell membrane. Possesses an intrinsic ATPase activity and utilizes ATP to gate its channel; the passive flow of anions through the channel is gated by cycles of ATP binding and hydrolysis by the ATP-binding domains. The ion channel is also permeable to HCO(3)(-); selectivity depends on the extracellular chloride concentration. Exerts its function also by modulating the activity of other ion channels and transporters. Contributes to the regulation of the pH and the ion content of the epithelial fluid layer. Modulates the activity of the epithelial sodium channel (ENaC) complex, in part by regulating the cell surface expression of the ENaC complex. May regulate bicarbonate secretion and salvage in epithelial cells by regulating the transporter SLC4A7. Can inhibit the chloride channel activity of ANO1. Plays a role in the chloride and bicarbonate homeostasis during sperm epididymal maturation and capacitation. This chain is Cystic fibrosis transmembrane conductance regulator, found in Chlorocebus aethiops (Green monkey).